We begin with the raw amino-acid sequence, 50 residues long: Large ribosomal subunit protein bL33B (50 aa).

Belongs to the bacterial ribosomal protein bL33 family.

The chain is Large ribosomal subunit protein bL33B from Mesomycoplasma hyopneumoniae (strain 7448) (Mycoplasma hyopneumoniae).